A 383-amino-acid chain; its full sequence is Mannitol-1-phosphate 5-dehydrogenase (383 aa).

3–14 (ALHFGAGNIGRG) lines the NAD(+) pocket.

Belongs to the mannitol dehydrogenase family.

It carries out the reaction D-mannitol 1-phosphate + NAD(+) = beta-D-fructose 6-phosphate + NADH + H(+). This Serratia proteamaculans (strain 568) protein is Mannitol-1-phosphate 5-dehydrogenase.